The primary structure comprises 318 residues: Deoxyribose-phosphate aldolase (318 aa).

Asp155 (proton donor/acceptor) is an active-site residue. Lys218 functions as the Schiff-base intermediate with acetaldehyde in the catalytic mechanism. The active-site Proton donor/acceptor is Lys254.

It belongs to the DeoC/FbaB aldolase family. DeoC type 2 subfamily. Interacts with YBX1.

The protein localises to the cytoplasm. The protein resides in the cytoplasmic granule. It localises to the nucleus. The enzyme catalyses 2-deoxy-D-ribose 5-phosphate = D-glyceraldehyde 3-phosphate + acetaldehyde. Its pathway is carbohydrate degradation; 2-deoxy-D-ribose 1-phosphate degradation; D-glyceraldehyde 3-phosphate and acetaldehyde from 2-deoxy-alpha-D-ribose 1-phosphate: step 2/2. In terms of biological role, catalyzes a reversible aldol reaction between acetaldehyde and D-glyceraldehyde 3-phosphate to generate 2-deoxy-D-ribose 5-phosphate. Participates in stress granule (SG) assembly. May allow ATP production from extracellular deoxyinosine in conditions of energy deprivation. This Mus musculus (Mouse) protein is Deoxyribose-phosphate aldolase (Dera).